The primary structure comprises 923 residues: ATP-dependent Clp protease ATP-binding subunit ClpA homolog CD4B, chloroplastic (923 aa).

The 143-residue stretch at 92-234 (FERFTEKAIK…RTQVIRMVGE (143 aa)) folds into the Clp R domain. 2 repeat regions span residues 95–160 (FTEK…IGRG) and 170–234 (FTPR…MVGE). The segment at 255–502 (LEEYGTNLTK…RVRLRHAQLP (248 aa)) is i. 300 to 307 (GEPGVGKT) contacts ATP. The UVR domain occupies 509–544 (EKELRQITKEKNEAVRGQDFEKAGELRDREMDLKAQ). Residues 569-760 (VTEADIQHIV…LLIMTSNVGS (192 aa)) are II. 643-650 (GPTGVGKS) is a binding site for ATP.

The protein belongs to the ClpA/ClpB family.

The protein localises to the plastid. It localises to the chloroplast. Its function is as follows. May interact with a ClpP-like protease involved in degradation of denatured proteins in the chloroplast. The polypeptide is ATP-dependent Clp protease ATP-binding subunit ClpA homolog CD4B, chloroplastic (CD4B) (Solanum lycopersicum (Tomato)).